The chain runs to 470 residues: DNA primase large subunit (470 aa).

4 residues coordinate [4Fe-4S] cluster: C279, C358, C376, and C414. Positions 449-470 (EEKKSAKQSNNKENENQSIDEK) are disordered.

This sequence belongs to the eukaryotic-type primase large subunit family. Heterodimer of a small subunit and a large subunit. Requires [4Fe-4S] cluster as cofactor.

Its function is as follows. DNA primase is the polymerase that synthesizes small RNA primers for the Okazaki fragments made during discontinuous DNA replication. The sequence is that of DNA primase large subunit (prim2) from Dictyostelium discoideum (Social amoeba).